Here is a 373-residue protein sequence, read N- to C-terminus: Sorting nexin-21 (373 aa).

The disordered stretch occupies residues 1 to 107 (MHRGTQEGAM…RSPPPDGQWG (107 aa)). Residues 21-37 (ALAGDGPGEAAASPEAE) show a composition bias toward low complexity. Polar residues predominate over residues 55 to 65 (SRLSGTLSFTS). Residues 66-81 (AEDDEDDEDEDDEEAG) are compositionally biased toward acidic residues. Residues 129-246 (QRLLFEVTSA…DFFVLPELRR (118 aa)) enclose the PX domain. Residues arginine 171, serine 173, lysine 198, and arginine 212 each coordinate a 1,2-diacyl-sn-glycero-3-phospho-(1D-myo-inositol-3-phosphate).

This sequence belongs to the sorting nexin family. As to quaternary structure, monomer. In terms of tissue distribution, highly expressed in fetus liver, but only weakly expressed in brain, skeleton muscle, smooth muscle, and cardiac muscle, kidney, and adrenal gland.

It is found in the cytoplasmic vesicle membrane. The protein localises to the early endosome membrane. In terms of biological role, binds to membranes enriched in phosphatidylinositol 3-phosphate (PtdIns(P3)) and phosphatidylinositol 4,5-bisphosphate. May be involved in several stages of intracellular trafficking. The chain is Sorting nexin-21 (SNX21) from Homo sapiens (Human).